The primary structure comprises 957 residues: Glycine dehydrogenase (decarboxylating) (957 aa).

Residue Lys-708 is modified to N6-(pyridoxal phosphate)lysine.

Belongs to the GcvP family. In terms of assembly, the glycine cleavage system is composed of four proteins: P, T, L and H. The cofactor is pyridoxal 5'-phosphate.

It carries out the reaction N(6)-[(R)-lipoyl]-L-lysyl-[glycine-cleavage complex H protein] + glycine + H(+) = N(6)-[(R)-S(8)-aminomethyldihydrolipoyl]-L-lysyl-[glycine-cleavage complex H protein] + CO2. In terms of biological role, the glycine cleavage system catalyzes the degradation of glycine. The P protein binds the alpha-amino group of glycine through its pyridoxal phosphate cofactor; CO(2) is released and the remaining methylamine moiety is then transferred to the lipoamide cofactor of the H protein. The polypeptide is Glycine dehydrogenase (decarboxylating) (Escherichia coli O6:H1 (strain CFT073 / ATCC 700928 / UPEC)).